We begin with the raw amino-acid sequence, 466 residues long: Proline--tRNA ligase (466 aa).

Belongs to the class-II aminoacyl-tRNA synthetase family. ProS type 3 subfamily. In terms of assembly, homodimer.

The protein resides in the cytoplasm. It carries out the reaction tRNA(Pro) + L-proline + ATP = L-prolyl-tRNA(Pro) + AMP + diphosphate. Functionally, catalyzes the attachment of proline to tRNA(Pro) in a two-step reaction: proline is first activated by ATP to form Pro-AMP and then transferred to the acceptor end of tRNA(Pro). The chain is Proline--tRNA ligase from Picrophilus torridus (strain ATCC 700027 / DSM 9790 / JCM 10055 / NBRC 100828 / KAW 2/3).